Consider the following 335-residue polypeptide: Pharynx and intestine in excess protein 1 (335 aa).

K68 participates in a covalent cross-link: Glycyl lysine isopeptide (Lys-Gly) (interchain with G-Cter in SUMO). The C3H1-type 1 zinc finger occupies 98-126 (EYKTRLCDAFRREGYCPYNDNCTYAHGQD). Residues 130–156 (VPRRRQEYYSRDPPRERRDSRSRRDDV) show a composition bias toward basic and acidic residues. A disordered region spans residues 130-188 (VPRRRQEYYSRDPPRERRDSRSRRDDVDTTINRSSSSASKHHDENRRPSNNHGSSNRRQ). 2 stretches are compositionally biased toward polar residues: residues 158 to 167 (TTINRSSSSA) and 177 to 187 (PSNNHGSSNRR). Residues 184 to 211 (SNRRQICHNFERGNCRYGPRCRFIHVEQ) form a C3H1-type 2 zinc finger. The required for inhibition of Ser-2 phosphorylation stretch occupies residues 288–291 (MAPT).

In terms of assembly, interacts with hda-1, let-418 and mep-1. Interacts (via C terminus) with cit-1.1 (via C terminus). Sumoylated in adult germ cells.

Its subcellular location is the nucleus. The protein resides in the cytoplasm. The protein localises to the cytoskeleton. It is found in the microtubule organizing center. It localises to the centrosome. Its subcellular location is the spindle. The protein resides in the cytoplasmic granule. In terms of biological role, maternally provided pie-1 is required for germline cell fate determination. Functions as a repressor of RNA polymerase II-dependent gene expression in the developing germline. Required for expression of nos-2 in P4 germline blastomere cells. Inhibits the histone deacetylase activity of hda-1. Represses transcriptional activation of cdk-9 and cit-1.1, which are members of the P-TEFb complex. Acts redundantly with gei-17 to promote piRNA-mediated silencing and fertility in adult germline. Promotes the sumoylation of hda-1 in adult animals but not in embryos thereby regulating its interaction with mep-1. In Caenorhabditis elegans, this protein is Pharynx and intestine in excess protein 1.